A 90-amino-acid chain; its full sequence is Small ribosomal subunit protein uS15 (90 aa).

It belongs to the universal ribosomal protein uS15 family. As to quaternary structure, part of the 30S ribosomal subunit. Forms a bridge to the 50S subunit in the 70S ribosome, contacting the 23S rRNA.

In terms of biological role, one of the primary rRNA binding proteins, it binds directly to 16S rRNA where it helps nucleate assembly of the platform of the 30S subunit by binding and bridging several RNA helices of the 16S rRNA. Functionally, forms an intersubunit bridge (bridge B4) with the 23S rRNA of the 50S subunit in the ribosome. In Campylobacter curvus (strain 525.92), this protein is Small ribosomal subunit protein uS15.